Here is a 430-residue protein sequence, read N- to C-terminus: Tol-Pal system protein TolB (430 aa).

An N-terminal signal peptide occupies residues M1–A21.

It belongs to the TolB family. In terms of assembly, the Tol-Pal system is composed of five core proteins: the inner membrane proteins TolA, TolQ and TolR, the periplasmic protein TolB and the outer membrane protein Pal. They form a network linking the inner and outer membranes and the peptidoglycan layer.

The protein resides in the periplasm. Functionally, part of the Tol-Pal system, which plays a role in outer membrane invagination during cell division and is important for maintaining outer membrane integrity. TolB occupies a key intermediary position in the Tol-Pal system because it communicates directly with both membrane-embedded components, Pal in the outer membrane and TolA in the inner membrane. In Serratia proteamaculans (strain 568), this protein is Tol-Pal system protein TolB.